We begin with the raw amino-acid sequence, 164 residues long: 2-C-methyl-D-erythritol 2,4-cyclodiphosphate synthase (164 aa).

A divalent metal cation is bound by residues aspartate 9 and histidine 11. 4-CDP-2-C-methyl-D-erythritol 2-phosphate-binding positions include 9–11 (DAH) and 36–37 (HS). Histidine 44 contacts a divalent metal cation. 4-CDP-2-C-methyl-D-erythritol 2-phosphate-binding positions include 58–60 (DLG), 63–67 (FPDSD), 134–137 (TTTE), phenylalanine 141, and arginine 144.

The protein belongs to the IspF family. As to quaternary structure, homotrimer. Requires a divalent metal cation as cofactor.

It carries out the reaction 4-CDP-2-C-methyl-D-erythritol 2-phosphate = 2-C-methyl-D-erythritol 2,4-cyclic diphosphate + CMP. It participates in isoprenoid biosynthesis; isopentenyl diphosphate biosynthesis via DXP pathway; isopentenyl diphosphate from 1-deoxy-D-xylulose 5-phosphate: step 4/6. Its function is as follows. Involved in the biosynthesis of isopentenyl diphosphate (IPP) and dimethylallyl diphosphate (DMAPP), two major building blocks of isoprenoid compounds. Catalyzes the conversion of 4-diphosphocytidyl-2-C-methyl-D-erythritol 2-phosphate (CDP-ME2P) to 2-C-methyl-D-erythritol 2,4-cyclodiphosphate (ME-CPP) with a corresponding release of cytidine 5-monophosphate (CMP). This chain is 2-C-methyl-D-erythritol 2,4-cyclodiphosphate synthase, found in Alkalilimnicola ehrlichii (strain ATCC BAA-1101 / DSM 17681 / MLHE-1).